A 351-amino-acid chain; its full sequence is MTQSTNFDDVYPVQWRDDQVILIDQTRLPLEYKEVAIADYEAMGHAIKSMVVRGAPAIGVAAAYGMYLGARRIQTTELREFVVQLEFVADQLRQTRPTAVNLFWAIDQMLNVAYHSGENVEQIKANLLSQAQQIQLDDLRTCQAIGAAGLEVLPREPHQLTILTHCNAGALATAGYGTAIGVIRAAWSAGRLARVYADETRPRLQGAKLTVWECVQAGIPVTLITDNMAAHCMQQQRIDAVVVGADRIARNGDIANKIGTYGLAVLAKMHAIPFFVAAPLSTVDFALDDGSQIPIEERDPVEIYQPEGNRITPEGAEFYNPAFDVTPASLITAIITEQGAIAPEKLADLQA.

Substrate-binding positions include 53 to 55, R96, and Q205; that span reads RGA. Residue D246 is the Proton donor of the active site. 256–257 serves as a coordination point for substrate; that stretch reads NK.

The protein belongs to the eIF-2B alpha/beta/delta subunits family. MtnA subfamily.

The enzyme catalyses 5-(methylsulfanyl)-alpha-D-ribose 1-phosphate = 5-(methylsulfanyl)-D-ribulose 1-phosphate. It participates in amino-acid biosynthesis; L-methionine biosynthesis via salvage pathway; L-methionine from S-methyl-5-thio-alpha-D-ribose 1-phosphate: step 1/6. Catalyzes the interconversion of methylthioribose-1-phosphate (MTR-1-P) into methylthioribulose-1-phosphate (MTRu-1-P). This is Methylthioribose-1-phosphate isomerase from Synechocystis sp. (strain ATCC 27184 / PCC 6803 / Kazusa).